Reading from the N-terminus, the 2291-residue chain is Protein Ycf2 (2291 aa).

1645-1652 (GSIGTGRS) provides a ligand contact to ATP.

The protein belongs to the Ycf2 family.

It is found in the plastid. The protein resides in the chloroplast stroma. In terms of biological role, probable ATPase of unknown function. Its presence in a non-photosynthetic plant (Epifagus virginiana) and experiments in tobacco indicate that it has an essential function which is probably not related to photosynthesis. The protein is Protein Ycf2 of Olimarabidopsis pumila (Dwarf rocket).